The following is a 390-amino-acid chain: Lipid droplet-regulating VLDL assembly factor AUP1 homolog (390 aa).

The Cytoplasmic portion of the chain corresponds to 1-32 (MASPEASSSGNTEDLRIEDLFHQKRNEDTIAK). An intramembrane segment occupies 33-53 (IFSIIYAPVGLIILLIRVFLG). Topologically, residues 54-390 (FHTFIVACLL…NRQKYMNRDS (337 aa)) are cytoplasmic. The region spanning 305–347 (QMDECAMRIKQSFPSFHLSAIRRDLEKTRSQTTTVNNLKAGKI) is the CUE domain.

This sequence belongs to the AUP1 family.

It is found in the endoplasmic reticulum membrane. Its subcellular location is the lipid droplet. The polypeptide is Lipid droplet-regulating VLDL assembly factor AUP1 homolog (Caenorhabditis elegans).